The sequence spans 275 residues: Probable histone chaperone asf-1 (275 aa).

Composition is skewed to acidic residues over residues 157 to 166 (EDPVAEPVED), 183 to 207 (DGQE…EVDL), and 230 to 247 (KMED…DDEP). Residues 157–275 (EDPVAEPVED…SDKTNNEMVQ (119 aa)) form a disordered region. The segment covering 265–275 (LSDKTNNEMVQ) has biased composition (basic and acidic residues).

It belongs to the ASF1 family. In terms of assembly, interacts with histone H3 and histone H4.

It is found in the nucleus. Its function is as follows. Histone chaperone that facilitates histone deposition and histone exchange and removal during nucleosome assembly and disassembly. The sequence is that of Probable histone chaperone asf-1 from Caenorhabditis elegans.